Here is a 423-residue protein sequence, read N- to C-terminus: Gamma-glutamyl phosphate reductase (423 aa).

Belongs to the gamma-glutamyl phosphate reductase family.

Its subcellular location is the cytoplasm. The catalysed reaction is L-glutamate 5-semialdehyde + phosphate + NADP(+) = L-glutamyl 5-phosphate + NADPH + H(+). The protein operates within amino-acid biosynthesis; L-proline biosynthesis; L-glutamate 5-semialdehyde from L-glutamate: step 2/2. Functionally, catalyzes the NADPH-dependent reduction of L-glutamate 5-phosphate into L-glutamate 5-semialdehyde and phosphate. The product spontaneously undergoes cyclization to form 1-pyrroline-5-carboxylate. The chain is Gamma-glutamyl phosphate reductase from Burkholderia lata (strain ATCC 17760 / DSM 23089 / LMG 22485 / NCIMB 9086 / R18194 / 383).